The sequence spans 162 residues: Putative pre-16S rRNA nuclease (162 aa).

The protein belongs to the YqgF nuclease family.

It localises to the cytoplasm. In terms of biological role, could be a nuclease involved in processing of the 5'-end of pre-16S rRNA. The sequence is that of Putative pre-16S rRNA nuclease from Brucella abortus (strain S19).